Here is a 60-residue protein sequence, read N- to C-terminus: Cecropin-B1 (60 aa).

A signal peptide spans 1-24; the sequence is MNFSKVFALVLLIGLVLLTGHTEA.

The protein belongs to the cecropin family.

It is found in the secreted. Functionally, putative antimicrobial peptide. Partially neutralizes lipopolysaccharides (LPS). Exhibits anti-inflammatory properties: inhibits LPS-induced iNOS/NOS2 transcription, nitric oxide (NO) and pro-inflammatory cytokine production in mouse macrophages and human peripheral blood mononuclear cells (PBMCs); inhibits LPS-induced activation of MAPK and NF-kappa-B signaling pathways in mouse macrophages. This Aedes aegypti (Yellowfever mosquito) protein is Cecropin-B1.